Consider the following 256-residue polypeptide: Tetraspanin-32 (256 aa).

4 helical membrane passes run 15 to 35 (LITN…VVVI), 61 to 81 (AFYV…LSTI), 90 to 110 (LMAA…QVAF), and 203 to 223 (CTSL…WFAI).

This sequence belongs to the tetraspanin (TM4SF) family. As to expression, expressed exclusively in hematopoietic tissues. Expression detected in spleen, thymus, bone marrow and peripheral blood leukocytes but not in heart, brain, lung, liver, kidney or testis.

It localises to the membrane. The protein is Tetraspanin-32 (Tspan32) of Mus musculus (Mouse).